The primary structure comprises 274 residues: uncharacterized protein (274 aa).

Residues 99–206 (NNVISGYVDL…ESEMEIFIQK (108 aa)) adopt a coiled-coil conformation.

This is an uncharacterized protein from Dictyostelium discoideum (Social amoeba).